A 244-amino-acid polypeptide reads, in one-letter code: EEF1A lysine methyltransferase 2 (244 aa).

A disordered region spans residues 1–27 (MNADAEGHSGAVVPAQSPEGSSAADDF). Ser21 carries the phosphoserine modification.

Belongs to the class I-like SAM-binding methyltransferase superfamily. EFM4 family.

The protein localises to the cytoplasm. It localises to the nucleus. It catalyses the reaction L-lysyl-[protein] + 3 S-adenosyl-L-methionine = N(6),N(6),N(6)-trimethyl-L-lysyl-[protein] + 3 S-adenosyl-L-homocysteine + 3 H(+). In terms of biological role, protein-lysine methyltransferase that selectively catalyzes the trimethylation of EEF1A at 'Lys-318'. The protein is EEF1A lysine methyltransferase 2 of Mus musculus (Mouse).